The sequence spans 285 residues: Probable endonuclease 4 (285 aa).

Residues histidine 69, histidine 109, glutamate 145, aspartate 179, histidine 182, histidine 216, aspartate 229, histidine 231, and glutamate 261 each contribute to the Zn(2+) site.

This sequence belongs to the AP endonuclease 2 family. Zn(2+) is required as a cofactor.

It catalyses the reaction Endonucleolytic cleavage to 5'-phosphooligonucleotide end-products.. Functionally, endonuclease IV plays a role in DNA repair. It cleaves phosphodiester bonds at apurinic or apyrimidinic (AP) sites, generating a 3'-hydroxyl group and a 5'-terminal sugar phosphate. The chain is Probable endonuclease 4 from Shigella boydii serotype 4 (strain Sb227).